The chain runs to 129 residues: Glycine cleavage system H protein (129 aa).

Residues 23 to 104 (SVTVGITQHA…CYAAWLFKLK (82 aa)) form the Lipoyl-binding domain. Lysine 64 carries the post-translational modification N6-lipoyllysine.

Belongs to the GcvH family. The glycine cleavage system is composed of four proteins: P, T, L and H. (R)-lipoate serves as cofactor.

In terms of biological role, the glycine cleavage system catalyzes the degradation of glycine. The H protein shuttles the methylamine group of glycine from the P protein to the T protein. In Nitrosomonas europaea (strain ATCC 19718 / CIP 103999 / KCTC 2705 / NBRC 14298), this protein is Glycine cleavage system H protein.